The following is a 67-amino-acid chain: Beta-defensin 9 (67 aa).

The signal sequence occupies residues 1 to 24; it reads MRTLCSLLLICCLLFSYTTPAANS. Intrachain disulfides connect Cys-34–Cys-62, Cys-41–Cys-55, and Cys-45–Cys-63.

Belongs to the beta-defensin family. Weakly expressed in adult and neonatal brain.

The protein localises to the secreted. Its function is as follows. Has antibacterial activity. The polypeptide is Beta-defensin 9 (Defb9) (Mus musculus (Mouse)).